The following is a 486-amino-acid chain: UDP-N-acetylmuramoyl-L-alanyl-D-glutamate--2,6-diaminopimelate ligase (486 aa).

A UDP-N-acetyl-alpha-D-muramoyl-L-alanyl-D-glutamate-binding site is contributed by serine 30. Position 112-118 (112-118) interacts with ATP; that stretch reads GTNGKTT. Residues 154-155, serine 181, glutamine 187, and arginine 189 each bind UDP-N-acetyl-alpha-D-muramoyl-L-alanyl-D-glutamate; that span reads TT. Position 221 is an N6-carboxylysine (lysine 221). Meso-2,6-diaminopimelate contacts are provided by residues arginine 378, 402–405, glycine 455, and glutamate 459; that span reads DNPR. A Meso-diaminopimelate recognition motif motif is present at residues 402-405; that stretch reads DNPR.

This sequence belongs to the MurCDEF family. MurE subfamily. The cofactor is Mg(2+). Post-translationally, carboxylation is probably crucial for Mg(2+) binding and, consequently, for the gamma-phosphate positioning of ATP.

The protein resides in the cytoplasm. It catalyses the reaction UDP-N-acetyl-alpha-D-muramoyl-L-alanyl-D-glutamate + meso-2,6-diaminopimelate + ATP = UDP-N-acetyl-alpha-D-muramoyl-L-alanyl-gamma-D-glutamyl-meso-2,6-diaminopimelate + ADP + phosphate + H(+). It participates in cell wall biogenesis; peptidoglycan biosynthesis. Catalyzes the addition of meso-diaminopimelic acid to the nucleotide precursor UDP-N-acetylmuramoyl-L-alanyl-D-glutamate (UMAG) in the biosynthesis of bacterial cell-wall peptidoglycan. This is UDP-N-acetylmuramoyl-L-alanyl-D-glutamate--2,6-diaminopimelate ligase from Cytophaga hutchinsonii (strain ATCC 33406 / DSM 1761 / CIP 103989 / NBRC 15051 / NCIMB 9469 / D465).